Consider the following 1438-residue polypeptide: Pyochelin synthetase PchE (1438 aa).

Residues 6–85 (DSRTALRDWL…AWLDLLACAD (80 aa)) form the Carrier 1 domain. Position 46 is an O-(pantetheine 4'-phosphoryl)serine (Ser-46). The condensation/cyclization stretch occupies residues 136 to 442 (RTRDVDPQRL…ARRQGQPRSA (307 aa)). The interval 563–950 (RAAEAPDADA…GRVDQQVKVR (388 aa)) is adenylation. One can recognise a Carrier 2 domain in the interval 1350–1425 (EPLEAHEQAL…GLARHLQAQT (76 aa)). Residue Ser-1385 is modified to O-(pantetheine 4'-phosphoryl)serine.

It belongs to the NRP synthetase family. Pantetheine 4'-phosphate serves as cofactor.

It catalyses the reaction holo-[peptidyl-carrier protein] + L-cysteine + ATP = L-cysteinyl-[peptidyl-carrier protein] + AMP + diphosphate. It functions in the pathway siderophore biosynthesis. It participates in antifungal biosynthesis. Involved in the biosynthesis of the siderophore pyochelin. Accepts salicylate activated by PchD at the first peptidyl carrier domain (ArCP), and activates and fixes one molecule of cysteine at the second peptidyl carrier domain (PCP1) via a thioester linkage to the phosphopanthetheine moiety. Then catalyzes the condensation reaction between the salicylate bound to the first site and the cysteine bound to the second site, and the cyclization of the cysteine to form the salicyl-thiazolinyl-S-PCP1 intermediate at the second site. When this intermediate is released by the action of a thioesterase, it produces the antifungal antibiotic dihydroaeruginoic acid (Dha or hydroxyphenyl-thiazolinyl-carboxylate). This is Pyochelin synthetase PchE from Pseudomonas aeruginosa (strain UCBPP-PA14).